Reading from the N-terminus, the 235-residue chain is UPF0173 metal-dependent hydrolase mll0680 (235 aa).

It belongs to the UPF0173 family.

The protein is UPF0173 metal-dependent hydrolase mll0680 of Mesorhizobium japonicum (strain LMG 29417 / CECT 9101 / MAFF 303099) (Mesorhizobium loti (strain MAFF 303099)).